Here is a 389-residue protein sequence, read N- to C-terminus: Probable family 17 glucosidase SCW10 (389 aa).

The signal sequence occupies residues 1-18 (MRFSNFLTVSALLTGALG). Residues 19-29 (APAVRHKHEKR) constitute a propeptide that is removed on maturation. The segment at 70 to 134 (ASQATTSTLE…SSASSSISAS (65 aa)) is disordered. A glycan (N-linked (GlcNAc...) asparagine) is linked at asparagine 279. The active-site Nucleophile is glutamate 326.

The protein belongs to the glycosyl hydrolase 17 family. Glycosylated.

It localises to the secreted. Its subcellular location is the cell wall. Glucanases possibly play a role in cell expansion during growth, in cell-cell fusion during mating, and in spore release during sporulation. The chain is Probable family 17 glucosidase SCW10 (SCW10) from Saccharomyces cerevisiae (strain ATCC 204508 / S288c) (Baker's yeast).